A 463-amino-acid polypeptide reads, in one-letter code: Perilipin-5 (463 aa).

Positions 1-32 are disordered; that stretch reads MDQRGEDTTLAPHSRMSGDQTAQDPGSSLGEL. The segment at 1–123 is interaction with LIPE; it reads MDQRGEDTTL…KLEEKLPFLQ (123 aa). The tract at residues 1 to 188 is essential for lipid droplet targeting; it reads MDQRGEDTTL…RFLPMTEAEL (188 aa). 3 positions are modified to phosphoserine: serine 17, serine 163, and serine 337. Residues 17-26 show a composition bias toward polar residues; the sequence is SGDQTAQDPG. The interval 200-463 is interaction with PNPLA2 and ABHD5; it reads VGTVEEQRQQ…KHTMMPELDF (264 aa). The segment at 433-463 is disordered; the sequence is AWEAESADPGGQEAEPPRGQGKHTMMPELDF. The necessary for mitochondria recruitment at the lipid droplet surface stretch occupies residues 444 to 463; sequence QEAEPPRGQGKHTMMPELDF.

Belongs to the perilipin family. In terms of assembly, homooligomer. Interacts with PNPLA2; prevents interaction of PNPLA2 with ABHD5. Interacts with ABHD5; targets ABHD5 to lipid droplets and promotes interaction of ABHD5 with PNPLA2. Interacts with LIPE. Phosphorylated by PKA. Phosphorylated on serine in skeletal muscle at rest or with lipolytic stimulation. Highly expressed in oxidative tissues, including heart, liver, brown adipose tissue (BAT) and slow-twitch fibers of skeletal muscle. Lower expression in epididymal white adipose tissue and anterior tibialis and quadriceps. Expressed in adrenal glands. Isoform 2 has the highest expression in heart.

It localises to the lipid droplet. It is found in the cytoplasm. Its subcellular location is the mitochondrion. Lipid droplet-associated protein that maintains the balance between lipogenesis and lipolysis and also regulates fatty acid oxidation in oxidative tissues. Recruits mitochondria to the surface of lipid droplets and is involved in lipid droplet homeostasis by regulating both the storage of fatty acids in the form of triglycerides and the release of fatty acids for mitochondrial fatty acid oxidation. In lipid droplet triacylglycerol hydrolysis, plays a role as a scaffolding protein for three major key lipolytic players: ABHD5, PNPLA2 and LIPE. Reduces the triacylglycerol hydrolase activity of PNPLA2 by recruiting and sequestering PNPLA2 to lipid droplets. Phosphorylation by PKA enables lipolysis probably by promoting release of ABHD5 from the perilipin scaffold and by facilitating interaction of ABHD5 with PNPLA2. Also increases lipolysis through interaction with LIPE and upon PKA-mediated phosphorylation of LIPE. The polypeptide is Perilipin-5 (Plin5) (Mus musculus (Mouse)).